A 251-amino-acid polypeptide reads, in one-letter code: MRRPMVAGNWKMHGTRASVAELIEGLGKQVLPGSVDIAVMPASLFTNQVIEGLRATSIIVGAQDAAIQAEQGALTGEIASSQLADAGCKLVLVGHSERRQLIGEQDDVLNKKFAAIQASGLTPVLCIGETLEERKAGQTLEVVGRQLDSVIAEFGVSALINAVIAYEPVWAIGTGLTASPQEAQEVHAAIRAHLAKENAEVAQGVRLLYGGSVKAANAVELFSMPDIDGGLIGGASLNADEFGAICRAAGN.

9–11 (NWK) is a substrate binding site. Histidine 95 serves as the catalytic Electrophile. Glutamate 167 (proton acceptor) is an active-site residue. Substrate is bound by residues glycine 173, serine 212, and 233 to 234 (GG).

It belongs to the triosephosphate isomerase family. Homodimer.

The protein resides in the cytoplasm. It carries out the reaction D-glyceraldehyde 3-phosphate = dihydroxyacetone phosphate. Its pathway is carbohydrate biosynthesis; gluconeogenesis. It functions in the pathway carbohydrate degradation; glycolysis; D-glyceraldehyde 3-phosphate from glycerone phosphate: step 1/1. Functionally, involved in the gluconeogenesis. Catalyzes stereospecifically the conversion of dihydroxyacetone phosphate (DHAP) to D-glyceraldehyde-3-phosphate (G3P). The polypeptide is Triosephosphate isomerase (Pseudomonas savastanoi pv. phaseolicola (strain 1448A / Race 6) (Pseudomonas syringae pv. phaseolicola (strain 1448A / Race 6))).